A 152-amino-acid chain; its full sequence is Nucleoside diphosphate kinase (152 aa).

ATP-binding residues include Lys11, Phe59, Arg87, Thr93, Arg104, and Asn114. Catalysis depends on His117, which acts as the Pros-phosphohistidine intermediate.

Belongs to the NDK family. In terms of assembly, homotetramer. The cofactor is Mg(2+).

The protein resides in the cytoplasm. It catalyses the reaction a 2'-deoxyribonucleoside 5'-diphosphate + ATP = a 2'-deoxyribonucleoside 5'-triphosphate + ADP. The catalysed reaction is a ribonucleoside 5'-diphosphate + ATP = a ribonucleoside 5'-triphosphate + ADP. Its function is as follows. Major role in the synthesis of nucleoside triphosphates other than ATP. The ATP gamma phosphate is transferred to the NDP beta phosphate via a ping-pong mechanism, using a phosphorylated active-site intermediate. The polypeptide is Nucleoside diphosphate kinase (Prochlorococcus marinus (strain MIT 9515)).